The following is a 282-amino-acid chain: 2-dehydro-3-deoxyphosphooctonate aldolase (282 aa).

It belongs to the KdsA family.

The protein resides in the cytoplasm. It carries out the reaction D-arabinose 5-phosphate + phosphoenolpyruvate + H2O = 3-deoxy-alpha-D-manno-2-octulosonate-8-phosphate + phosphate. The protein operates within carbohydrate biosynthesis; 3-deoxy-D-manno-octulosonate biosynthesis; 3-deoxy-D-manno-octulosonate from D-ribulose 5-phosphate: step 2/3. Its pathway is bacterial outer membrane biogenesis; lipopolysaccharide biosynthesis. This chain is 2-dehydro-3-deoxyphosphooctonate aldolase, found in Shewanella woodyi (strain ATCC 51908 / MS32).